Reading from the N-terminus, the 342-residue chain is MEGDNCNKSRHKSHNMINPNYASVRCTQPLPSVIQLRSRNKMIGITEDPSSDSEPVSSNQPLLLTNLSYEVHTFNDNNNHERPAPQEQSTQNTMISMQSEQKSDRFTASNLGMFQYMKFEIGEDGDDHEEEAILTNREKLRHILHSKPIHVAIIVLVVLDSFLVVGELLIDLKVIIVPHGNPAPEILHGFSLSILSIFMVEIALKIIADHRHFIHHKVEVLDAVVVVISFGVDIALIFVGESEALAAIGLLVILRLWRVFRIINGIIVTVKTKADDRVHEIKKKNSELELQIHNLEEKLSQKEQDMSRLHEILRCNNIDIPPTVPLTTSVQIHSTTTASADV.

2 disordered regions span residues 1-20 (MEGD…INPN) and 74-102 (FNDN…SEQK). Over 1–148 (MEGDNCNKSR…KLRHILHSKP (148 aa)) the chain is Cytoplasmic. Residues 86-102 (QEQSTQNTMISMQSEQK) show a composition bias toward polar residues. Residues 149 to 169 (IHVAIIVLVVLDSFLVVGELL) form a helical membrane-spanning segment. Topologically, residues 170-185 (IDLKVIIVPHGNPAPE) are extracellular. The helical transmembrane segment at 186–208 (ILHGFSLSILSIFMVEIALKIIA) threads the bilayer. The Cytoplasmic segment spans residues 209 to 217 (DHRHFIHHK). The helical transmembrane segment at 218 to 238 (VEVLDAVVVVISFGVDIALIF) threads the bilayer. Residues 239-247 (VGESEALAA) are Extracellular-facing. Residues 248 to 268 (IGLLVILRLWRVFRIINGIIV) traverse the membrane as a helical segment. Residues 269-342 (TVKTKADDRV…HSTTTASADV (74 aa)) are Cytoplasmic-facing. A coiled-coil region spans residues 271-315 (KTKADDRVHEIKKKNSELELQIHNLEEKLSQKEQDMSRLHEILRC).

The protein belongs to the hydrogen channel family. As to quaternary structure, homodimer.

It is found in the membrane. The protein localises to the cell membrane. Less sensitive to zinc ions as compared to the mammalian homologs. Its function is as follows. Mediates the voltage-dependent proton permeability of excitable membranes. Forms a proton-selective channel through which protons may pass in accordance with their electrochemical gradient. The sequence is that of Voltage-gated hydrogen channel 1 (HVCN1) from Ciona intestinalis (Transparent sea squirt).